Reading from the N-terminus, the 512-residue chain is UDP-N-acetylmuramate--L-alanine ligase (512 aa).

Position 132–138 (132–138 (GAHGKTT)) interacts with ATP.

Belongs to the MurCDEF family.

It is found in the cytoplasm. The enzyme catalyses UDP-N-acetyl-alpha-D-muramate + L-alanine + ATP = UDP-N-acetyl-alpha-D-muramoyl-L-alanine + ADP + phosphate + H(+). Its pathway is cell wall biogenesis; peptidoglycan biosynthesis. Cell wall formation. This chain is UDP-N-acetylmuramate--L-alanine ligase, found in Bifidobacterium longum (strain NCC 2705).